A 451-amino-acid polypeptide reads, in one-letter code: Phosphoglucosamine mutase (451 aa).

Residue Ser102 is the Phosphoserine intermediate of the active site. Residues Ser102, Asp243, Asp245, and Asp247 each contribute to the Mg(2+) site. The residue at position 102 (Ser102) is a Phosphoserine.

It belongs to the phosphohexose mutase family. Mg(2+) serves as cofactor. Activated by phosphorylation.

The enzyme catalyses alpha-D-glucosamine 1-phosphate = D-glucosamine 6-phosphate. Its function is as follows. Catalyzes the conversion of glucosamine-6-phosphate to glucosamine-1-phosphate. The sequence is that of Phosphoglucosamine mutase from Salinispora tropica (strain ATCC BAA-916 / DSM 44818 / JCM 13857 / NBRC 105044 / CNB-440).